The primary structure comprises 247 residues: MQPKPLAPPPGQHPLVQALAASIRSAWAGLPGLEILPCDEDLRFIQGQLDGEGLSIGNELFRCIGLRKLHLEVARLGNGLQILHSVWFPDPHYDLPIFGADIVAGPAGISAAIVDLSPTSDALPEQLIQRLEARPWPAFRQVRELPAWGSAIFSNKVCFIRPDGADEEAAFQQLVSHYLQVMATSVIEATPEQSTALTTVRRYEGQLNYCLQQKRNDKTRRVLEKAFDSAWADRYIDMLLFDNPPEL.

The protein belongs to the HY2 family.

The enzyme catalyses (2R,3Z)-phycocyanobilin + 4 oxidized [2Fe-2S]-[ferredoxin] = biliverdin IXalpha + 4 reduced [2Fe-2S]-[ferredoxin] + 4 H(+). Functionally, catalyzes the four-electron reduction of biliverdin IX-alpha (2-electron reduction at both the A and D rings); the reaction proceeds via an isolatable 2-electron intermediate, 181,182-dihydrobiliverdin. In Synechococcus sp. (strain CC9605), this protein is Phycocyanobilin:ferredoxin oxidoreductase.